Consider the following 289-residue polypeptide: Coiled-coil domain-containing protein 137 (289 aa).

Disordered stretches follow at residues 1 to 64 (MAGA…QEIP), 149 to 184 (EVQAAPKEKSEQKKAKKAFQKRRLDKVRRKKEEKAA), and 204 to 225 (QPPELTARPQRSVSKDQPGRRS). Low complexity predominate over residues 7 to 20 (GAAVSRVQAGPGSP). The residue at position 19 (serine 19) is a Phosphoserine. A coiled-coil region spans residues 155–197 (KEKSEQKKAKKAFQKRRLDKVRRKKEEKAADRLEQELLRDTVK). A compositionally biased stretch (basic residues) spans 162 to 177 (KAKKAFQKRRLDKVRR). Serine 233 bears the Phosphoserine mark. Residues 247–273 (RQRIVEEERERAVQAYRALKQRQQQLH) are a coiled coil. Residues 265 to 289 (LKQRQQQLHGERPHLTSRKKPEPQL) form a disordered region. Over residues 273–289 (HGERPHLTSRKKPEPQL) the composition is skewed to basic and acidic residues.

The protein resides in the chromosome. The polypeptide is Coiled-coil domain-containing protein 137 (CCDC137) (Homo sapiens (Human)).